The primary structure comprises 629 residues: DNA mismatch repair protein MutL (629 aa).

Residues 376–396 are disordered; the sequence is QYHEKPQQNQPHFSNTPVLPN. Polar residues predominate over residues 382–396; sequence QQNQPHFSNTPVLPN.

It belongs to the DNA mismatch repair MutL/HexB family.

Functionally, this protein is involved in the repair of mismatches in DNA. It is required for dam-dependent methyl-directed DNA mismatch repair. May act as a 'molecular matchmaker', a protein that promotes the formation of a stable complex between two or more DNA-binding proteins in an ATP-dependent manner without itself being part of a final effector complex. This is DNA mismatch repair protein MutL from Haemophilus influenzae (strain PittEE).